Here is a 600-residue protein sequence, read N- to C-terminus: Elongation factor 4 (600 aa).

The 183-residue stretch at 3–185 (KYIRNFSIIA…CLIHDIPHPQ (183 aa)) folds into the tr-type G domain. Residues 15–20 (DHGKST) and 132–135 (NKID) each bind GTP.

Belongs to the TRAFAC class translation factor GTPase superfamily. Classic translation factor GTPase family. LepA subfamily.

It is found in the cell inner membrane. The enzyme catalyses GTP + H2O = GDP + phosphate + H(+). Required for accurate and efficient protein synthesis under certain stress conditions. May act as a fidelity factor of the translation reaction, by catalyzing a one-codon backward translocation of tRNAs on improperly translocated ribosomes. Back-translocation proceeds from a post-translocation (POST) complex to a pre-translocation (PRE) complex, thus giving elongation factor G a second chance to translocate the tRNAs correctly. Binds to ribosomes in a GTP-dependent manner. The polypeptide is Elongation factor 4 (Blochmanniella pennsylvanica (strain BPEN)).